The following is a 130-amino-acid chain: Small ribosomal subunit protein uS8 (130 aa).

This sequence belongs to the universal ribosomal protein uS8 family. As to quaternary structure, part of the 30S ribosomal subunit. Contacts proteins S5 and S12.

One of the primary rRNA binding proteins, it binds directly to 16S rRNA central domain where it helps coordinate assembly of the platform of the 30S subunit. In Pseudoalteromonas atlantica (strain T6c / ATCC BAA-1087), this protein is Small ribosomal subunit protein uS8.